Here is a 416-residue protein sequence, read N- to C-terminus: Adenylosuccinate synthetase (416 aa).

GTP-binding positions include 13–19 and 41–43; these read GDEGKGK and GHT. Asp-14 (proton acceptor) is an active-site residue. 2 residues coordinate Mg(2+): Asp-14 and Gly-41. IMP is bound by residues 14–17, 39–42, Thr-126, Arg-140, Gln-220, Thr-235, and Arg-299; these read DEGK and NAGH. Catalysis depends on His-42, which acts as the Proton donor. Substrate is bound at residue 295 to 301; it reads VSTGRKR. GTP contacts are provided by residues Arg-301, 327 to 329, and 405 to 407; these read KLD and STS.

Belongs to the adenylosuccinate synthetase family. Homodimer. It depends on Mg(2+) as a cofactor.

Its subcellular location is the cytoplasm. The catalysed reaction is IMP + L-aspartate + GTP = N(6)-(1,2-dicarboxyethyl)-AMP + GDP + phosphate + 2 H(+). Its pathway is purine metabolism; AMP biosynthesis via de novo pathway; AMP from IMP: step 1/2. Plays an important role in the de novo pathway of purine nucleotide biosynthesis. Catalyzes the first committed step in the biosynthesis of AMP from IMP. This chain is Adenylosuccinate synthetase, found in Campylobacter jejuni subsp. jejuni serotype O:23/36 (strain 81-176).